The primary structure comprises 710 residues: Solute carrier organic anion transporter family member 3A1 (710 aa).

The residue at position 1 (M1) is an N-acetylmethionine. The span at 1–15 (MQGKKPGGSSGGGRS) shows a compositional bias: gly residues. Residues 1–25 (MQGKKPGGSSGGGRSGELQGDEAQR) form a disordered region. The Cytoplasmic portion of the chain corresponds to 1-40 (MQGKKPGGSSGGGRSGELQGDEAQRNKKKKKKVSCFSNIK). A helical membrane pass occupies residues 41–60 (IFLVSECALMLAQGTVGAYL). Over 61-79 (VSVLTTLERRFNLQSADVG) the chain is Extracellular. The chain crosses the membrane as a helical span at residues 80–100 (VIASSFEIGNLALILFVSYFG). Residues 101–106 (ARGHRP) lie on the Cytoplasmic side of the membrane. Residues 107-131 (RLIGCGGIVMALGALLSALPEFLTH) traverse the membrane as a helical segment. The Extracellular portion of the chain corresponds to 132–174 (QYKYEAGEIRWGAEGRDVCATNGSSSDEGPDPDLICRNRTATN). N-linked (GlcNAc...) asparagine glycosylation is found at N153 and N169. A helical membrane pass occupies residues 175–203 (MMYLLLIGAQVLLGIGATPVQPLGVSYID). Over 204 to 222 (DHVRRKDSSLYIGILFTML) the chain is Cytoplasmic. Residues 223–243 (VFGPACGFILGSFCTKIYVDA) form a helical membrane-spanning segment. Residues 244 to 261 (VFIDTSNLDITPDDPRWI) lie on the Extracellular side of the membrane. The helical transmembrane segment at 262–286 (GAWWGGFLLCGALLFFSSLLMFGFP) threads the bilayer. At 287–344 (QSLPPHSEPGMESEQAMLPEREYERPKPSNGVLRHPLEPDSSASCFQQLRVIPKVTKH) the chain is on the cytoplasmic side. The helical transmembrane segment at 345-366 (LLSNPVFTCIVLAACMEIAVVA) threads the bilayer. Over 367 to 386 (GFAAFLGKYLEQQFNLTTSS) the chain is Extracellular. The N-linked (GlcNAc...) asparagine glycan is linked to N381. The chain crosses the membrane as a helical span at residues 387–410 (ANQLLGMTAIPCACLGIFLGGLLV). At 411–414 (KKLS) the chain is on the cytoplasmic side. A helical transmembrane segment spans residues 415 to 438 (LSALGAIRMAMLVNLVSTACYVSF). Over 439–539 (LFLGCDTVPV…PGCQEAFLTF (101 aa)) the chain is Extracellular. N457 carries an N-linked (GlcNAc...) asparagine glycan. In terms of domain architecture, Kazal-like spans 465-513 (LDPYSPCNNNCECQTDSFTPVCGADGITYLSACFAGCNSTNLTGCACLT). Intrachain disulfides connect C471–C501, C477–C497, and C486–C511. N502, N505, and N519 each carry an N-linked (GlcNAc...) asparagine glycan. The chain crosses the membrane as a helical span at residues 540–562 (LCVMCVCSLIGAMAQTPSVIILI). Topologically, residues 563-571 (RTVSPELKS) are cytoplasmic. The chain crosses the membrane as a helical span at residues 572–597 (YALGVLFLLLRLLGFIPPPLIFGAGI). Over 598 to 630 (DSTCLFWSTFCGEQGACVLYDNVVYRYLYVSIA) the chain is Extracellular. The chain crosses the membrane as a helical span at residues 631 to 648 (IALKSFAFILYTTTWQCL). The Cytoplasmic portion of the chain corresponds to 649-705 (RKNYKRYIKNHEGGLSTSEFLASTLTLDNLGRDPVPAHQTHRTKFIYNLEDHEWCEN).

Belongs to the organo anion transporter (TC 2.A.60) family. Expressed in many brain regions, including frontal cortex, brain stem and cerebellum. Associated with neuronal bodies in a punctated matter. Detected at the arcuate nucleus and the choroid plexus (at protein level). Little expression, if any, in oligodendrocytes. In the cardiovascular system, detected in cardiac muscle cells and endothelial cells of aorta, coronary artery and left ventricular endocardium (at protein level). In the respiratory system, detected in alveolar epithelial cells and in mucosal epithelium of the trachea (at protein level). In the reproductive system, detected in spermatozoa, oocytes, smooth muscle cells of the ovary, epithelium of the glandula uterine, smooth muscle cells of the myometrium and epithelium of the endometrium (at protein level). In the kidney, detected in afferent and efferent arterioles, and the epithelium of distal tubules and collecting tubules (at protein level).

It is found in the basolateral cell membrane. The protein resides in the apical cell membrane. The protein localises to the basal cell membrane. The enzyme catalyses L-thyroxine(out) = L-thyroxine(in). The catalysed reaction is prostaglandin E1(out) = prostaglandin E1(in). It catalyses the reaction prostaglandin E2(out) = prostaglandin E2(in). It carries out the reaction prostaglandin F2alpha(out) = prostaglandin F2alpha(in). The enzyme catalyses (5Z,8Z,11Z,14Z)-eicosatetraenoate(out) = (5Z,8Z,11Z,14Z)-eicosatetraenoate(in). The catalysed reaction is taurocholate(out) = taurocholate(in). It catalyses the reaction glycocholate(out) = glycocholate(in). It carries out the reaction estrone 3-sulfate(out) = estrone 3-sulfate(in). The enzyme catalyses argipressin(out) = argipressin(in). Putative organic anion antiporter with apparent broad substrate specificity. Recognizes various substrates including thyroid hormone L-thyroxine, prostanoids such as prostaglandin E1 and E2, bile acids such as taurocholate, glycolate and glycochenodeoxycholate and peptide hormones such as L-arginine vasopressin, likely operating in a tissue-specific manner. The transport mechanism, its electrogenicity and potential tissue-specific counterions remain to be elucidated. In Rattus norvegicus (Rat), this protein is Solute carrier organic anion transporter family member 3A1 (Slco3a1).